Here is a 219-residue protein sequence, read N- to C-terminus: MARIEIDKMSKLLQVYFIMGSNNCTRDPLAVLKEALDGGVTIFQFREKGEGSLIGEDRVRFAKELQTLCKEYSVPFIVNDDVELAIELDADGVHVGQDDEGITSVREKMGDKIIGVSAHTIEEARFAIENGADYLGVGPIFPTSTKKDTKAVQGTKGLAYFREQGITVPIVGIGGITIENTAAVIEAGADGVSVISAISLAESAYESTRKLAEEVKRSL.

4-amino-2-methyl-5-(diphosphooxymethyl)pyrimidine-binding positions include 44–48 (QFREK) and N79. The Mg(2+) site is built by D80 and D99. S117 contacts 4-amino-2-methyl-5-(diphosphooxymethyl)pyrimidine. 143–145 (TST) lines the 2-[(2R,5Z)-2-carboxy-4-methylthiazol-5(2H)-ylidene]ethyl phosphate pocket. K146 is a binding site for 4-amino-2-methyl-5-(diphosphooxymethyl)pyrimidine. 2-[(2R,5Z)-2-carboxy-4-methylthiazol-5(2H)-ylidene]ethyl phosphate contacts are provided by residues G175 and 195–196 (IS).

Belongs to the thiamine-phosphate synthase family. Mg(2+) is required as a cofactor.

It catalyses the reaction 2-[(2R,5Z)-2-carboxy-4-methylthiazol-5(2H)-ylidene]ethyl phosphate + 4-amino-2-methyl-5-(diphosphooxymethyl)pyrimidine + 2 H(+) = thiamine phosphate + CO2 + diphosphate. The catalysed reaction is 2-(2-carboxy-4-methylthiazol-5-yl)ethyl phosphate + 4-amino-2-methyl-5-(diphosphooxymethyl)pyrimidine + 2 H(+) = thiamine phosphate + CO2 + diphosphate. It carries out the reaction 4-methyl-5-(2-phosphooxyethyl)-thiazole + 4-amino-2-methyl-5-(diphosphooxymethyl)pyrimidine + H(+) = thiamine phosphate + diphosphate. Its pathway is cofactor biosynthesis; thiamine diphosphate biosynthesis; thiamine phosphate from 4-amino-2-methyl-5-diphosphomethylpyrimidine and 4-methyl-5-(2-phosphoethyl)-thiazole: step 1/1. In terms of biological role, condenses 4-methyl-5-(beta-hydroxyethyl)thiazole monophosphate (THZ-P) and 2-methyl-4-amino-5-hydroxymethyl pyrimidine pyrophosphate (HMP-PP) to form thiamine monophosphate (TMP). The polypeptide is Thiamine-phosphate synthase (Bacillus cereus (strain B4264)).